A 604-amino-acid chain; its full sequence is Putative sodium-dependent multivitamin transporter (604 aa).

A run of 6 helical transmembrane segments spans residues 4 to 24, 48 to 68, 78 to 98, 134 to 154, 160 to 180, and 188 to 208; these read LGAW…AIGI, VAPV…ILGV, MFVV…YLII, VLYM…VTGL, IVIV…KAVL, and LLMF…AGSL. Residues asparagine 222 and asparagine 225 are each glycosylated (N-linked (GlcNAc...) asparagine). 7 helical membrane passes run 234–254, 273–293, 331–351, 389–409, 413–433, 440–460, and 511–531; these read HTWF…YGVN, ALWW…FSGL, LAGL…SSII, LFFG…GGLL, LSIF…GMYV, GAIG…FGQP, and ALGF…FALL.

The protein belongs to the sodium:solute symporter (SSF) (TC 2.A.21) family.

It localises to the cell membrane. The protein is Putative sodium-dependent multivitamin transporter of Drosophila melanogaster (Fruit fly).